The following is a 179-amino-acid chain: Dual-action ribosomal maturation protein DarP (179 aa).

Belongs to the DarP family.

The protein resides in the cytoplasm. Its function is as follows. Member of a network of 50S ribosomal subunit biogenesis factors which assembles along the 30S-50S interface, preventing incorrect 23S rRNA structures from forming. Promotes peptidyl transferase center (PTC) maturation. The sequence is that of Dual-action ribosomal maturation protein DarP from Aliivibrio fischeri (strain ATCC 700601 / ES114) (Vibrio fischeri).